A 277-amino-acid polypeptide reads, in one-letter code: MLYIIGLGLGDEKDITLRGLEAVKKSQKVYMEAYTSLLSFGLSADGLSNLEKFYGKPIILADREMVEEKAGDMIDEAIDNDVAFLVVGDPFGATTHSDLVVRAKTLGVKVEVVHNASVMNAVGICGLQLYHYGETVSIPFFTETWRPDSFYEKIKKNRSLGLHTLCLLDIRVKEPTFESLCRGGKKQYEPPRYMSVNTAIEQLLEVEQKHGDSVYGEDTQCVGFARLGSEDQTIVAGTMKQLESVDFGAPLHCLVIVGETHPVEEEMLEFYKYKSGN.

Residues leucine 9, aspartate 89, glycine 92, 117–118, leucine 168, leucine 227, and histidine 252 each bind S-adenosyl-L-methionine; that span reads SV.

This sequence belongs to the diphthine synthase family.

The catalysed reaction is 2-[(3S)-amino-3-carboxypropyl]-L-histidyl-[translation elongation factor 2] + 4 S-adenosyl-L-methionine = diphthine methyl ester-[translation elongation factor 2] + 4 S-adenosyl-L-homocysteine + 3 H(+). The protein operates within protein modification; peptidyl-diphthamide biosynthesis. Its function is as follows. S-adenosyl-L-methionine-dependent methyltransferase that catalyzes four methylations of the modified target histidine residue in translation elongation factor 2 (EF-2), to form an intermediate called diphthine methyl ester. The four successive methylation reactions represent the second step of diphthamide biosynthesis. In Arabidopsis thaliana (Mouse-ear cress), this protein is Probable diphthine methyl ester synthase.